We begin with the raw amino-acid sequence, 226 residues long: MQESTPVITIDGPSGAGKGTVARIVADQLGWHLLDSGAIYRVLAVAIQHHQLSLDDEEPLIPMAAHLDVQFEINSQGEAKVILEGENVTEIIRTEEVGGLASKVAAFPRVREALLRRQRAFSVSPGLIADGRDMGTVVFPKAPVKIFLTASAEERADRRFNQLKEKGIDVNIGRLLDDIRQRDERDQNRKVAPLIPAEGALTIDSTDISITEVVNKILMFANGKLT.

Residue 12-20 coordinates ATP; sequence GPSGAGKGT.

The protein belongs to the cytidylate kinase family. Type 1 subfamily.

The protein resides in the cytoplasm. The enzyme catalyses CMP + ATP = CDP + ADP. It catalyses the reaction dCMP + ATP = dCDP + ADP. This Colwellia psychrerythraea (strain 34H / ATCC BAA-681) (Vibrio psychroerythus) protein is Cytidylate kinase.